Here is a 136-residue protein sequence, read N- to C-terminus: ATP synthase epsilon chain (136 aa).

This sequence belongs to the ATPase epsilon chain family. In terms of assembly, F-type ATPases have 2 components, CF(1) - the catalytic core - and CF(0) - the membrane proton channel. CF(1) has five subunits: alpha(3), beta(3), gamma(1), delta(1), epsilon(1). CF(0) has three main subunits: a, b and c.

Its subcellular location is the cellular thylakoid membrane. Its function is as follows. Produces ATP from ADP in the presence of a proton gradient across the membrane. The chain is ATP synthase epsilon chain (atpC) from Prochloron didemni.